Consider the following 558-residue polypeptide: Rhamnogalacturonase B (558 aa).

The signal sequence occupies residues 1–21 (MLLDKLSVLSFLGLAPIFAAA). Cys-42 and Cys-68 are oxidised to a cystine. A glycan (N-linked (GlcNAc...) asparagine) is linked at Asn-145. Asp-219 acts as the Proton donor in catalysis. Cys-221 and Cys-238 are disulfide-bonded. N-linked (GlcNAc...) asparagine glycans are attached at residues Asn-239 and Asn-254. His-294 is an active-site residue. A glycan (N-linked (GlcNAc...) asparagine) is linked at Asn-321. 2 disulfide bridges follow: Cys-344–Cys-350 and Cys-372–Cys-381. Residues 503–526 (VGAQEGSTTSAPSFAAPSGAGNSP) are compositionally biased toward low complexity. The tract at residues 503–558 (VGAQEGSTTSAPSFAAPSGAGNSPQGPTGASGFGEKGQQGEQGEQGEQGEQGVCYV) is disordered.

It belongs to the glycosyl hydrolase 28 family.

The protein localises to the secreted. It carries out the reaction Endohydrolysis of alpha-D-GalA-(1-&gt;2)-alpha-L-Rha glycosidic bond in the rhamnogalacturonan I backbone with initial inversion of anomeric configuration releasing oligosaccharides with beta-D-GalA at the reducing end.. Its function is as follows. Pectinolytic enzymes consist of four classes of enzymes: pectine lyase, polygalacturonase, pectin methylesterase and rhamnogalacturonase. Hydrolyzes alpha-D-galacturonopyranosyl-(1,2)-alpha-L-rhamnopyranosyl linkages in the backbone of the hairy regions of pectins. The sequence is that of Rhamnogalacturonase B (rhgB) from Aspergillus niger.